We begin with the raw amino-acid sequence, 538 residues long: Cytochrome P450 monooxygenase claO (538 aa).

The next 2 helical transmembrane spans lie at 7-27 and 222-242; these read IGAF…KLVG and INPS…PILL. C475 contacts heme.

Belongs to the cytochrome P450 family. The cofactor is heme.

The protein resides in the membrane. It functions in the pathway secondary metabolite biosynthesis; terpenoid biosynthesis. Cytochrome P450 monooxygenase; part of the gene cluster that mediates the biosynthesis of clavilactone A, a meroterpenoid that features a unique benzo-fused ten-membered carbocyclic ring unit with an alpha,beta-epoxy-gamma-lactone moiety, forming an intriguing 10/5/3 tricyclic nested skeleton. Cytochrome P450 monooxygenases claO, claP, claQ, claU, and claW are close orthologs, suggesting that a redundant function or pseudogenes are present in the cla cluster. These monoxygenases are not involved in clavilactone A biosynthesis nor in its modification. ClaR, ClaS and ClaT are sufficient to produce clavilactone A. The biosynthesis begins with the prenyltransferase claS that transfers geranyl pyrophosphate (GPP) to hydroquinone to produces geranylhydroquinone. The cytochrome P450 monooxygenase claR then catalyzes the diradical coupling reaction between the intramolecular hydroquinone and allyl moieties to form the benzo-fused ten-membered carbocyclic ring unit of wigantol. Finally the cytochrome P450 monooxygenase claT exquisitely and stereoselectively assembles the alpha,beta-epoxy-gamma-lactone moiety, producing clavilactone A via arnebinol A. The polypeptide is Cytochrome P450 monooxygenase claO (Ampulloclitocybe clavipes (Club foot)).